A 511-amino-acid polypeptide reads, in one-letter code: Caspase-8 (511 aa).

Residues M1–S242 constitute a propeptide that is removed on maturation. Catalysis depends on residues H352 and C393. A propeptide spanning residues K406–C415 is cleaved from the precursor.

It belongs to the peptidase C14A family. As to quaternary structure, heterotetramer that consists of two anti-parallel arranged heterodimers, each one formed by a 15 kDa (caspase-8 subunit p15) and a 10 kDa (caspase-8 subunit p10) subunit. Interacts with the N-terminus of Fadd.

The protein resides in the cytoplasm. The enzyme catalyses Strict requirement for Asp at position P1 and has a preferred cleavage sequence of (Leu/Asp/Val)-Glu-Thr-Asp-|-(Gly/Ser/Ala).. Functionally, effector of the programmed cell death (PCD) activators rpr, grim and W. May play an apoptotic role in the germline as well as soma. Role in immune response, required to resist Gram-negative bacterial infections by regulating DptA. Fadd interacts with Dredd, Fadd promotes cleavage of Dredd and is necessary and sufficient for enhancing Dredd-induced apoptosis. The protein is Caspase-8 of Drosophila pseudoobscura pseudoobscura (Fruit fly).